We begin with the raw amino-acid sequence, 3655 residues long: NuA4 acetyltransferase complex subunit Tra2 (3655 aa).

Residues 8–2459 (SLSSSIELLK…REYHIRLLGK (2452 aa)) form an HEAT region. HEAT repeat units follow at residues 46 to 89 (QLYA…CAHR), 94 to 131 (QYAQ…TFKF), 149 to 188 (TNLP…IIQQ), 230 to 268 (PGVQ…FIEF), 300 to 338 (LSEK…ILST), 374 to 412 (STLA…SIGL), 438 to 475 (FLLL…ETKS), 606 to 643 (IFLK…STSS), 644 to 683 (KFLN…VTVS), 735 to 772 (SLYK…ELCL), 783 to 820 (PYMS…LTPD), 828 to 867 (PYIE…RNRK), 1100 to 1141 (AFIL…QDHS), 1147 to 1184 (DRQV…QLFR), 1193 to 1230 (EIAP…LSNT), 1429 to 1470 (RKLL…LFHL), 1665 to 1704 (NLVS…FLLK), 1709 to 1746 (GILL…NVYA), 1753 to 1790 (IGAL…SEDV), 1808 to 1846 (QFPY…YIFS), 1891 to 1934 (EHRG…WNDL), 1973 to 2011 (SEAI…TDAN), 2036 to 2073 (ENLS…LSNT), 2120 to 2157 (DALH…LQIV), 2183 to 2221 (DQRR…NSPV), and 2401 to 2438 (DFVL…DEIP). Residues 2460-3655 (TPNVLETILT…QMDQLWQAWL (1196 aa)) are head. The region spanning 2484 to 3045 (LLVYLSKTYG…HFQLRTAYED (562 aa)) is the FAT domain. The segment at 3059–3105 (RGNSRLRENDSSSDNKSKDLSPSGSFSSVSQFNSKNGSPSSIDSSEK) is disordered. Positions 3063–3077 (RLRENDSSSDNKSKD) are enriched in basic and acidic residues. The span at 3078 to 3092 (LSPSGSFSSVSQFNS) shows a compositional bias: low complexity. In terms of domain architecture, PI3K/PI4K catalytic spans 3285-3625 (VPNVDLVRGH…VISHNVPEDL (341 aa)). Residues 3291-3297 (VRGHTMC) are G-loop. Positions 3491–3499 (NIGGRSPQK) are catalytic loop. Positions 3511 to 3536 (SQDLLPSMTSNQPVFHNTEAVPFRLT) are activation loop. The FATC domain maps to 3623 to 3655 (EDLPLNQTLVDLVSQATNPQQLAQMDQLWQAWL).

It belongs to the PI3/PI4-kinase family. TRA1 subfamily. As to quaternary structure, component of the NuA4 acetyltransferase complex. Tra1 is the scaffold subunit for binding to a variety of transcription activators or transcription factors to recruit NuA4 for targeted gene activation. Requires Hsp90 and its co-chaperone, the Triple-T complex (TTT), for its incorporation into NuA4. Interacts with tel2.

Functionally, component of the NuA4 histone H4/H2A acetyltransferase involved in transcription and DNA repair. This chain is NuA4 acetyltransferase complex subunit Tra2, found in Schizosaccharomyces pombe (strain 972 / ATCC 24843) (Fission yeast).